The chain runs to 275 residues: Ribosomal RNA small subunit methyltransferase A (275 aa).

6 residues coordinate S-adenosyl-L-methionine: asparagine 21, leucine 23, glycine 48, glutamate 69, aspartate 94, and asparagine 115.

It belongs to the class I-like SAM-binding methyltransferase superfamily. rRNA adenine N(6)-methyltransferase family. RsmA subfamily.

It is found in the cytoplasm. It catalyses the reaction adenosine(1518)/adenosine(1519) in 16S rRNA + 4 S-adenosyl-L-methionine = N(6)-dimethyladenosine(1518)/N(6)-dimethyladenosine(1519) in 16S rRNA + 4 S-adenosyl-L-homocysteine + 4 H(+). Specifically dimethylates two adjacent adenosines (A1518 and A1519) in the loop of a conserved hairpin near the 3'-end of 16S rRNA in the 30S particle. May play a critical role in biogenesis of 30S subunits. This is Ribosomal RNA small subunit methyltransferase A from Clostridium botulinum (strain Loch Maree / Type A3).